Here is a 665-residue protein sequence, read N- to C-terminus: LisH domain-containing protein ARMC9 (665 aa).

In terms of domain architecture, LisH spans His-7–Gly-39. Residues Glu-201–Gln-235 are a coiled coil. Ser-582 bears the Phosphoserine mark. The tract at residues Val-642–Val-665 is disordered.

Interacts with TOGARAM1, CCDC66, CEP104, CSPP1 and CEP290. Interacts with NDUFAF2.

Its subcellular location is the cytoplasm. It localises to the cytoskeleton. It is found in the cilium basal body. The protein localises to the cell projection. The protein resides in the cilium. Its subcellular location is the microtubule organizing center. It localises to the centrosome. It is found in the centriole. In terms of biological role, involved in ciliogenesis. It is required for appropriate acetylation and polyglutamylation of ciliary microtubules, and regulation of cilium length. Acts as a positive regulator of hedgehog (Hh)signaling. May participate in the trafficking and/or retention of GLI2 and GLI3 proteins at the ciliary tip. This Pongo abelii (Sumatran orangutan) protein is LisH domain-containing protein ARMC9 (ARMC9).